Consider the following 322-residue polypeptide: Glutamyl-Q tRNA(Asp) synthetase (322 aa).

Residues 28–32 (RFAPS) and Glu-64 each bind L-glutamate. The short motif at 31–41 (PSPSGDLHFGS) is the 'HIGH' region element. Residues Cys-120, Cys-122, Tyr-134, and Cys-138 each contribute to the Zn(2+) site. 2 residues coordinate L-glutamate: Tyr-191 and Arg-209. The short motif at 247–251 (KLSKQ) is the 'KMSKS' region element. Lys-250 is an ATP binding site.

The protein belongs to the class-I aminoacyl-tRNA synthetase family. GluQ subfamily. Zn(2+) serves as cofactor.

Its function is as follows. Catalyzes the tRNA-independent activation of glutamate in presence of ATP and the subsequent transfer of glutamate onto a tRNA(Asp). Glutamate is transferred on the 2-amino-5-(4,5-dihydroxy-2-cyclopenten-1-yl) moiety of the queuosine in the wobble position of the QUC anticodon. The polypeptide is Glutamyl-Q tRNA(Asp) synthetase (Pectobacterium atrosepticum (strain SCRI 1043 / ATCC BAA-672) (Erwinia carotovora subsp. atroseptica)).